Reading from the N-terminus, the 124-residue chain is Large ribosomal subunit protein bL21 (124 aa).

Belongs to the bacterial ribosomal protein bL21 family. Part of the 50S ribosomal subunit. Contacts protein L20.

Its function is as follows. This protein binds to 23S rRNA in the presence of protein L20. This is Large ribosomal subunit protein bL21 from Synechocystis sp. (strain ATCC 27184 / PCC 6803 / Kazusa).